A 468-amino-acid chain; its full sequence is Ribulose bisphosphate carboxylase large chain (468 aa).

An N6,N6,N6-trimethyllysine modification is found at Lys7. Positions 116 and 166 each coordinate substrate. Lys168 functions as the Proton acceptor in the catalytic mechanism. Residue Lys170 coordinates substrate. Mg(2+) is bound by residues Lys194, Asp196, and Glu197. Lys194 is modified (N6-carboxylysine). His287 serves as the catalytic Proton acceptor. Substrate contacts are provided by Arg288, His320, and Ser372.

Belongs to the RuBisCO large chain family. Type I subfamily. As to quaternary structure, heterohexadecamer of 8 large chains and 8 small chains. Requires Mg(2+) as cofactor.

The protein localises to the plastid. It is found in the chloroplast. The catalysed reaction is 2 (2R)-3-phosphoglycerate + 2 H(+) = D-ribulose 1,5-bisphosphate + CO2 + H2O. The enzyme catalyses D-ribulose 1,5-bisphosphate + O2 = 2-phosphoglycolate + (2R)-3-phosphoglycerate + 2 H(+). In terms of biological role, ruBisCO catalyzes two reactions: the carboxylation of D-ribulose 1,5-bisphosphate, the primary event in carbon dioxide fixation, as well as the oxidative fragmentation of the pentose substrate in the photorespiration process. Both reactions occur simultaneously and in competition at the same active site. The chain is Ribulose bisphosphate carboxylase large chain from Couroupita guianensis (Cannonball tree).